Here is a 737-residue protein sequence, read N- to C-terminus: Catalase-peroxidase 2 (737 aa).

Residues 1 to 33 are disordered; the sequence is MPEATEHPPIGEAQTEPAQSGCPMVIKPPVEGG. A cross-link (tryptophyl-tyrosyl-methioninium (Trp-Tyr) (with M-261)) is located at residues 107–235; sequence WHAAGTYRVQ…LGASHMGLIY (129 aa). His108 (proton acceptor) is an active-site residue. The segment at residues 235–261 is a cross-link (tryptophyl-tyrosyl-methioninium (Tyr-Met) (with W-107)); that stretch reads YVNPEGPEGNPDPIAAAIDIRETFGRM. His276 contributes to the heme binding site.

Belongs to the peroxidase family. Peroxidase/catalase subfamily. As to quaternary structure, homodimer or homotetramer. Requires heme b as cofactor. In terms of processing, formation of the three residue Trp-Tyr-Met cross-link is important for the catalase, but not the peroxidase activity of the enzyme.

The enzyme catalyses H2O2 + AH2 = A + 2 H2O. The catalysed reaction is 2 H2O2 = O2 + 2 H2O. Its function is as follows. Bifunctional enzyme with both catalase and broad-spectrum peroxidase activity. The protein is Catalase-peroxidase 2 of Mycolicibacterium vanbaalenii (strain DSM 7251 / JCM 13017 / BCRC 16820 / KCTC 9966 / NRRL B-24157 / PYR-1) (Mycobacterium vanbaalenii).